The primary structure comprises 118 residues: Succinate dehydrogenase assembly factor 1, mitochondrial (118 aa).

The LYR motif 1; required for interaction with HSC20 motif lies at 14–16 (LYR). The LYR motif 2; not required for interaction with HSC20 signature appears at 53 to 55 (LYR). An interaction with SDHB region spans residues 53–65 (LYRRGRRQLQMLR). Residues 72–118 (MGAFVRTRGPTEESNGAGAPGTLSGEGDDPRKPLDSMRTPKTPLDGR) form a disordered region.

Belongs to the complex I LYR family. SDHAF1 subfamily. As to quaternary structure, interacts with SDHB within an SDHA-SDHB subcomplex. Also interacts with the iron-sulfur transfer complex formed by HSC20, HSPA9 and ISCU through direct binding to HSC20. Binding of SDHAF1 to SDHB precedes and is necessary for recruitment of the iron-sulfur transfer complex by SDHAF1.

It localises to the mitochondrion matrix. Functionally, plays an essential role in the assembly of succinate dehydrogenase (SDH), an enzyme complex (also referred to as respiratory complex II) that is a component of both the tricarboxylic acid (TCA) cycle and the mitochondrial electron transport chain, and which couples the oxidation of succinate to fumarate with the reduction of ubiquinone (coenzyme Q) to ubiquinol. Promotes maturation of the iron-sulfur protein subunit SDHB of the SDH catalytic dimer, protecting it from the deleterious effects of oxidants. May act together with SDHAF3. Contributes to iron-sulfur cluster incorporation into SDHB by binding to SDHB and recruiting the iron-sulfur transfer complex formed by HSC20, HSPA9 and ISCU through direct binding to HSC20. The chain is Succinate dehydrogenase assembly factor 1, mitochondrial from Bos taurus (Bovine).